The sequence spans 170 residues: Transcriptional repressor NrdR (170 aa).

A zinc finger spans residues 3–34; the sequence is CPFCGTQDTKVVDSRLVSEGAQVRRRRTCIHC. Residues 49 to 139 form the ATP-cone domain; sequence PKLIKSDGSR…VYRSFKDISE (91 aa). Residues 151-170 are disordered; that stretch reads SVSIPKSKKTAPESKKEDQA. Over residues 160-170 the composition is skewed to basic and acidic residues; that stretch reads TAPESKKEDQA.

Belongs to the NrdR family. Requires Zn(2+) as cofactor.

In terms of biological role, negatively regulates transcription of bacterial ribonucleotide reductase nrd genes and operons by binding to NrdR-boxes. This is Transcriptional repressor NrdR from Marinomonas sp. (strain MWYL1).